A 469-amino-acid polypeptide reads, in one-letter code: Acyltransferase clz18 (469 aa).

The next 7 helical transmembrane spans lie at 21–41 (GLLSIIIFNAHLTPVIILGYD), 70–90 (LFTIPILKLVYSASPAVCLFF), 134–154 (LSLLAMASMIVPFALMKTGFF), 253–273 (ILAALAVLGVAVGSLECPLFW), 346–366 (GLIVPPRTWHSLGAVLVLYSL), 391–411 (IYLIHFCLVISFGPDLFSWVW), and 424–444 (VGFGITYSILFMAVLLTAAIF).

This sequence belongs to the acyltransferase 3 family.

It localises to the membrane. Its pathway is secondary metabolite biosynthesis. Acyltransferase; part of the gene cluster that mediates the biosynthesis of squalestatin S1 (SQS1, also known as zaragozic acid A), a heavily oxidized fungal polyketide that offers potent cholesterol lowering activity by targeting squalene synthase (SS). SQS1 is composed of a 2,8-dioxobicyclic[3.2.1]octane-3,4,5-tricarboxyclic acid core that is connected to two lipophilic polyketide arms. These initial steps feature the priming of an unusual benzoic acid starter unit onto the highly reducing polyketide synthase clz14, followed by oxaloacetate extension and product release to generate a tricarboxylic acid containing product. The phenylalanine ammonia lyase (PAL) clz10 and the acyl-CoA ligase clz12 are involved in transforming phenylalanine into benzoyl-CoA. The citrate synthase-like protein clz17 is involved in connecting the C-alpha-carbons of the hexaketide chain and oxaloacetate to afford the tricarboxylic acid unit. The potential hydrolytic enzymes, clz11 and clz13, are in close proximity to pks2 and may participate in product release. On the other side, the tetraketide arm is synthesized by a the squalestatin tetraketide synthase clz2 and enzymatically esterified to the core in the last biosynthetic step, by the acetyltransferase clz6. The biosynthesis of the tetraketide must involve 3 rounds of chain extension. After the first and second rounds methyl-transfer occurs, and in all rounds of extension the ketoreductase and dehydratase are active. The enoyl reductase and C-MeT of clz2 are not active in the final round of extension. The acetyltransferase clz6 appears to have a broad substrate selectivity for its acyl CoA substrate, allowing the in vitro synthesis of novel squalestatins. The biosynthesis of SQS1 requires several oxidative steps likely performed by oxidoreductases clz3, clz15 and clz16. Finally, in support of the identification of the cluster as being responsible for SQS1 production, the cluster contains a gene encoding a putative squalene synthase (SS) clz20, suggesting a likely mechanism for self-resistance. In Cochliobolus lunatus (Filamentous fungus), this protein is Acyltransferase clz18.